Consider the following 404-residue polypeptide: Metacaspase-1 (404 aa).

Residues 1–97 form a disordered region; sequence MHHHHQQPSY…NPQAFGHGAP (97 aa). Catalysis depends on residues histidine 195 and cysteine 251.

This sequence belongs to the peptidase C14B family.

In terms of biological role, involved in cell death (apoptosis). In Emericella nidulans (strain FGSC A4 / ATCC 38163 / CBS 112.46 / NRRL 194 / M139) (Aspergillus nidulans), this protein is Metacaspase-1 (casA).